We begin with the raw amino-acid sequence, 179 residues long: ATP synthase subunit delta (179 aa).

This sequence belongs to the ATPase delta chain family. F-type ATPases have 2 components, F(1) - the catalytic core - and F(0) - the membrane proton channel. F(1) has five subunits: alpha(3), beta(3), gamma(1), delta(1), epsilon(1). F(0) has three main subunits: a(1), b(2) and c(10-14). The alpha and beta chains form an alternating ring which encloses part of the gamma chain. F(1) is attached to F(0) by a central stalk formed by the gamma and epsilon chains, while a peripheral stalk is formed by the delta and b chains.

Its subcellular location is the cell inner membrane. Functionally, f(1)F(0) ATP synthase produces ATP from ADP in the presence of a proton or sodium gradient. F-type ATPases consist of two structural domains, F(1) containing the extramembraneous catalytic core and F(0) containing the membrane proton channel, linked together by a central stalk and a peripheral stalk. During catalysis, ATP synthesis in the catalytic domain of F(1) is coupled via a rotary mechanism of the central stalk subunits to proton translocation. This protein is part of the stalk that links CF(0) to CF(1). It either transmits conformational changes from CF(0) to CF(1) or is implicated in proton conduction. The sequence is that of ATP synthase subunit delta from Burkholderia thailandensis (strain ATCC 700388 / DSM 13276 / CCUG 48851 / CIP 106301 / E264).